The following is a 204-amino-acid chain: Thioredoxin-like 4, chloroplastic (204 aa).

Residues 1-27 (MSSLLNISHCSYHGYSGLTSRGGINTV) constitute a chloroplast transit peptide. The Thioredoxin domain maps to 63 to 201 (AKSLSQENLV…IDAAILKYTS (139 aa)). Active-site nucleophile residues include C119 and C122. An intrachain disulfide couples C119 to C122.

Belongs to the thioredoxin family.

Its subcellular location is the plastid. It localises to the chloroplast. Its function is as follows. Probable thiol-disulfide oxidoreductase that may participate in various redox reactions. This Arabidopsis thaliana (Mouse-ear cress) protein is Thioredoxin-like 4, chloroplastic.